The following is a 784-amino-acid chain: Probable aminopeptidase 1 (784 aa).

Substrate contacts are provided by residues Glu103 and 236 to 240 (GAMEN). His271 is a binding site for Zn(2+). Glu272 functions as the Proton acceptor in the catalytic mechanism. Zn(2+) contacts are provided by His275 and Glu294.

Belongs to the peptidase M1 family. Zn(2+) serves as cofactor.

The protein resides in the cytoplasm. The protein is Probable aminopeptidase 1 (ape1) of Saccharolobus solfataricus (strain ATCC 35092 / DSM 1617 / JCM 11322 / P2) (Sulfolobus solfataricus).